The sequence spans 898 residues: Cip1-interacting zinc finger protein (898 aa).

3 disordered regions span residues 48–69 (QAPL…QPLL), 157–305 (QSLL…ALEA), and 318–471 (VQAQ…QPQV). The span at 170–203 (NPSQFNLSGRNPQKQARTSSSTTPNRKDSSSQTM) shows a compositional bias: polar residues. Ser209 is subject to Phosphoserine. Residue Thr244 is modified to Phosphothreonine. Over residues 263-273 (RSSEEPTEKEP) the composition is skewed to basic and acidic residues. Lys280 is covalently cross-linked (Glycyl lysine isopeptide (Lys-Gly) (interchain with G-Cter in SUMO2)). Residues 318-327 (VQAQVQSQTQ) are compositionally biased toward low complexity. Residues 328–351 (PRIPSTDTQVQPKLQKQAQTQTSP) show a composition bias toward polar residues. Lys340 participates in a covalent cross-link: Glycyl lysine isopeptide (Lys-Gly) (interchain with G-Cter in SUMO2). Phosphoserine is present on Ser350. A compositionally biased stretch (low complexity) spans 355 to 383 (VLQQKQVQPQLQQEAEPQKQVQPQVQPQA). The segment covering 384 to 395 (HSQGPRQVQLQQ) has biased composition (polar residues). Lys401 is covalently cross-linked (Glycyl lysine isopeptide (Lys-Gly) (interchain with G-Cter in SUMO2)). Over residues 402-435 (QVQPQVQPQAHSQPPRQVQLQLQKQVQTQTYPQV) the composition is skewed to low complexity. Over residues 436-445 (HTQAQPSVQP) the composition is skewed to polar residues. Position 547 is a phosphoserine (Ser547). Residue Lys549 forms a Glycyl lysine isopeptide (Lys-Gly) (interchain with G-Cter in SUMO2) linkage. The interval 562 to 584 (STVPLTPVPRPSDSVSSTPAATS) is disordered. The residue at position 567 (Thr567) is a Phosphothreonine. Low complexity predominate over residues 572 to 584 (PSDSVSSTPAATS). Glycyl lysine isopeptide (Lys-Gly) (interchain with G-Cter in SUMO2) cross-links involve residues Lys588, Lys680, and Lys705. A Matrin-type zinc finger spans residues 799 to 830 (YICRICHKFYHSNSGAQLSHCKSLGHFENLQK). Residue Ser821 is modified to Phosphoserine. Residue Lys830 forms a Glycyl lysine isopeptide (Lys-Gly) (interchain with G-Cter in SUMO2) linkage. At Ser838 the chain carries Phosphoserine. The span at 859 to 879 (LFTSSGRPPSQPNTQDKTPSK) shows a compositional bias: polar residues. The segment at 859–898 (LFTSSGRPPSQPNTQDKTPSKVTARPSQPPLPRRSTRLKT) is disordered. A Glycyl lysine isopeptide (Lys-Gly) (interchain with G-Cter in SUMO2) cross-link involves residue Lys879.

Interacts with CIP/WAF1.

Its subcellular location is the nucleus. Its function is as follows. May regulate the subcellular localization of CIP/WAF1. This Homo sapiens (Human) protein is Cip1-interacting zinc finger protein (CIZ1).